The following is a 479-amino-acid chain: MTAAALLQWALASVPEIIVVTGACVLLIVGELVRKGRDDLLLWASVAIVLLAAVATLMLAGEMRPAYAGMFISDRFAVFFKLVFYLATILTFFLSRKYAEIEGIGRSEYYVLLLFALVGMMIMASAIDLLSIYVGLELMVLCTYVLTGFLRKERRSNEAALKYVILGAVSTAIFLYGVSLIYGLTGTTQLDRMAEAVSGGPLDPALLLAVVFIVAGLVFKIGAVPFHMWVPDVYEGAPTTITAFMSVAPKAAGFAVILRVFLNPLVEASNAWIIVAAIAVATMALGSFVALVQDNFKRLLAYSSIAHAGFAIFGVVAGGQDGIASVMLYLLIYTFMNLGIFGAVIMMRNGDFSGEVIEDYAGFAKFHPGLALLMLLYLFSLAGIPPTAGFFAKFYVLVALVERGFVALAVIAVLLSVVSAYFYIRIVMVIYMREPERAFEPALTPLVSATLAFTAAGTIGIGLFPAWFLRLAQQSAFGG.

A run of 14 helical transmembrane segments spans residues 9 to 29, 40 to 60, 75 to 95, 110 to 130, 131 to 151, 164 to 184, 206 to 226, 238 to 258, 272 to 292, 299 to 319, 326 to 346, 371 to 391, 404 to 424, and 449 to 469; these read WALASVPEIIVVTGACVLLIV, LLLWASVAIVLLAAVATLMLA, RFAVFFKLVFYLATILTFFLS, YVLLLFALVGMMIMASAIDLL, SIYVGLELMVLCTYVLTGFLR, VILGAVSTAIFLYGVSLIYGL, LLLAVVFIVAGLVFKIGAVPF, PTTITAFMSVAPKAAGFAVIL, WIIVAAIAVATMALGSFVALV, LLAYSSIAHAGFAIFGVVAGG, VMLYLLIYTFMNLGIFGAVIM, ALLMLLYLFSLAGIPPTAGFF, GFVALAVIAVLLSVVSAYFYI, and ATLAFTAAGTIGIGLFPAWFL.

This sequence belongs to the complex I subunit 2 family. In terms of assembly, NDH-1 is composed of 14 different subunits. Subunits NuoA, H, J, K, L, M, N constitute the membrane sector of the complex.

The protein localises to the cell inner membrane. The catalysed reaction is a quinone + NADH + 5 H(+)(in) = a quinol + NAD(+) + 4 H(+)(out). Functionally, NDH-1 shuttles electrons from NADH, via FMN and iron-sulfur (Fe-S) centers, to quinones in the respiratory chain. The immediate electron acceptor for the enzyme in this species is believed to be ubiquinone. Couples the redox reaction to proton translocation (for every two electrons transferred, four hydrogen ions are translocated across the cytoplasmic membrane), and thus conserves the redox energy in a proton gradient. The chain is NADH-quinone oxidoreductase subunit N 2 from Rhizobium meliloti (strain 1021) (Ensifer meliloti).